A 909-amino-acid chain; its full sequence is UPF0182 protein Moth_1139 (909 aa).

7 helical membrane passes run 8 to 28 (FCLL…SHFL), 51 to 71 (VGIR…NLLF), 103 to 123 (LGIL…PLAA), 165 to 185 (LLIT…FIFN), 201 to 221 (LVHF…GFRL), 245 to 265 (LLPG…IIVL), and 277 to 297 (AGIL…PLAV). Residues 843–862 (PAPAASPQPPSQAATGSPGN) are disordered.

It belongs to the UPF0182 family.

The protein localises to the cell membrane. The sequence is that of UPF0182 protein Moth_1139 from Moorella thermoacetica (strain ATCC 39073 / JCM 9320).